The primary structure comprises 942 residues: MORC family CW-type zinc finger protein 3 (942 aa).

Glycyl lysine isopeptide (Lys-Gly) (interchain with G-Cter in SUMO2) cross-links involve residues lysine 191, lysine 205, lysine 280, and lysine 293. The segment at 326-353 (AYEKVGCQLKANNMGVGVVGIIECNFLK) is nuclear matrix binding. A CW-type zinc finger spans residues 404–454 (KRPDQTWVQCDACLKWRKLPDGIDQLPEKWYCSNNPDPQFRNCEVPEEPED). Zn(2+)-binding residues include cysteine 413, cysteine 416, cysteine 435, and cysteine 446. The segment at 503–594 (SFSPVKESVP…ENSTPKPAVD (92 aa)) is RNA binding. Phosphoserine occurs at positions 517 and 543. Residue lysine 558 forms a Glycyl lysine isopeptide (Lys-Gly) (interchain with G-Cter in SUMO2) linkage. Residue serine 563 is modified to Phosphoserine. Residue lysine 604 forms a Glycyl lysine isopeptide (Lys-Gly) (interchain with G-Cter in SUMO1); alternate linkage. Residue lysine 604 forms a Glycyl lysine isopeptide (Lys-Gly) (interchain with G-Cter in SUMO2); alternate linkage. The interval 623–654 (PKPCVQASSTSTSTSRSDPGITVSTQTDAPGL) is disordered. The span at 630-639 (SSTSTSTSRS) shows a compositional bias: low complexity. Residues lysine 657, lysine 658, and lysine 743 each participate in a glycyl lysine isopeptide (Lys-Gly) (interchain with G-Cter in SUMO1); alternate cross-link. Residues lysine 657, lysine 658, and lysine 743 each participate in a glycyl lysine isopeptide (Lys-Gly) (interchain with G-Cter in SUMO2); alternate cross-link. Residues 696 to 874 (SHQLQELRSE…KSTGQQAAAD (179 aa)) are a coiled coil. Phosphoserine is present on serine 768. Lysine 797 participates in a covalent cross-link: Glycyl lysine isopeptide (Lys-Gly) (interchain with G-Cter in SUMO1); alternate. Residue lysine 797 forms a Glycyl lysine isopeptide (Lys-Gly) (interchain with G-Cter in SUMO2); alternate linkage.

Homodimer. The sumoylated form interacts with PML (via SUMO-interacting motif). Interacts with TP53. Post-translationally, sumoylation is involved in interaction with PML and localization to PML nuclear bodies.

It is found in the nucleus. It localises to the nucleoplasm. Its subcellular location is the nucleus matrix. The protein localises to the PML body. The protein resides in the chromosome. With respect to regulation, dimerization of the ATPase domain is strictly required for the catalytic activity and binding to double-stranded DNA. Disrupting the interface between ATPase and the CW domains releases autoinhibition since the CW domain sterically impedes binding of the ATPase domain to DNA. Functionally, nuclear matrix protein which forms MORC3-NBs (nuclear bodies) via an ATP-dependent mechanism and plays a role in innate immunity by restricting different viruses through modulation of the IFN response. Mechanistically, possesses a primary antiviral function through a MORC3-regulated element that activates IFNB1, and this function is guarded by a secondary IFN-repressing function. Sumoylated MORC3-NBs associates with PML-NBs and recruits TP53 and SP100, thus regulating TP53 activity. Binds RNA in vitro. Histone methylation reader which binds to non-methylated (H3K4me0), monomethylated (H3K4me1), dimethylated (H3K4me2) and trimethylated (H3K4me3) 'Lys-4' on histone H3. The order of binding preference is H3K4me3 &gt; H3K4me2 &gt; H3K4me1 &gt; H3K4me0. This chain is MORC family CW-type zinc finger protein 3, found in Mus musculus (Mouse).